The following is a 166-amino-acid chain: Interferon gamma (166 aa).

An N-terminal signal peptide occupies residues methionine 1–glycine 23. Glutamine 24 bears the Pyrrolidone carboxylic acid mark. N-linked (GlcNAc...) asparagine glycans are attached at residues asparagine 39 and asparagine 106.

Belongs to the type II (or gamma) interferon family. As to quaternary structure, homodimer. Interacts with IFNGR1 (via extracellular domain); this interaction promotes IFNGR1 dimerization. As to expression, released primarily from activated T lymphocytes.

It is found in the secreted. Its function is as follows. Type II interferon produced by immune cells such as T-cells and NK cells that plays crucial roles in antimicrobial, antiviral, and antitumor responses by activating effector immune cells and enhancing antigen presentation. Primarily signals through the JAK-STAT pathway after interaction with its receptor IFNGR1 to affect gene regulation. Upon IFNG binding, IFNGR1 intracellular domain opens out to allow association of downstream signaling components JAK2, JAK1 and STAT1, leading to STAT1 activation, nuclear translocation and transcription of IFNG-regulated genes. Many of the induced genes are transcription factors such as IRF1 that are able to further drive regulation of a next wave of transcription. Plays a role in class I antigen presentation pathway by inducing a replacement of catalytic proteasome subunits with immunoproteasome subunits. In turn, increases the quantity, quality, and repertoire of peptides for class I MHC loading. Increases the efficiency of peptide generation also by inducing the expression of activator PA28 that associates with the proteasome and alters its proteolytic cleavage preference. Up-regulates as well MHC II complexes on the cell surface by promoting expression of several key molecules such as cathepsins B/CTSB, H/CTSH, and L/CTSL. Participates in the regulation of hematopoietic stem cells during development and under homeostatic conditions by affecting their development, quiescence, and differentiation. The chain is Interferon gamma (IFNG) from Ovis aries (Sheep).